Here is an 879-residue protein sequence, read N- to C-terminus: Putative ankyrin repeat protein L88 (879 aa).

ANK repeat units lie at residues 22-62, 63-96, 100-133, 137-170, 174-207, 211-241, 245-278, 282-313, 317-347, 351-384, 387-420, 424-463, 470-499, 506-542, 546-578, 674-704, and 708-738; these read KGFT…QKNK, KGYT…KTNI, EGIT…DINA, NGYT…NIDD, NGLT…DINA, NGRT…DIEA, KGLT…NIEA, KLRT…NIET, RNNT…NINH, EGCN…NINN, SERT…DPNI, NGNT…NPNF, NSLT…DINS, SALL…DVNI, NGNT…NPNT, SGIT…DPNI, and KGET…NPYI.

The protein is Putative ankyrin repeat protein L88 of Acanthamoeba polyphaga mimivirus (APMV).